The following is a 1668-amino-acid chain: Chitin synthase chs-2 (1668 aa).

A compositionally biased stretch (basic and acidic residues) spans 1 to 19 (MMNTLDHRPLGRMETMEGK). Residues 1–51 (MMNTLDHRPLGRMETMEGKPDEDEVPTSSNSDAKGKGYYYSSGTVPTDDST) are disordered. The Cytoplasmic segment spans residues 1–116 (MMNTLDHRPL…HGFWHDASLQ (116 aa)). Residues 117-137 (VLKLATFLVLFLLTLGSAVVA) form a helical membrane-spanning segment. At 138–176 (KSTFILMTSAIGWGGQTITICNQVISEATQNTVKLKNAH) the chain is on the extracellular side. The chain crosses the membrane as a helical span at residues 177 to 197 (VVKWVWATLLALSAPEALCFV). Topologically, residues 198–212 (RSMHRTMFRNVKRPT) are cytoplasmic. A helical transmembrane segment spans residues 213 to 233 (FIQFVFVLIIETFHSIGVGIL). The Extracellular segment spans residues 234–242 (VFRIFPDLD). Residues 243-263 (AVTAAQLTNAMCFVPAILSVI) form a helical membrane-spanning segment. At 264-271 (SRKPNKSA) the chain is on the cytoplasmic side. The chain crosses the membrane as a helical span at residues 272–292 (LLLVIIDFAAIAAQSSGFWAL). The Extracellular segment spans residues 293–301 (PMFLPNLQK). Residues 302–322 (HLVAIPVSLTLISLAWWQNFV) form a helical membrane-spanning segment. At 323-347 (HRDSVFPPVRTLAKFAQRLSERRSK) the chain is on the cytoplasmic side. Residues 348–368 (TYAFVSLWKICIYVVCCFLFI) form a helical membrane-spanning segment. The Extracellular segment spans residues 369-487 (SSRMKIEDML…IYSNYVERNQ (119 aa)). N396 carries N-linked (GlcNAc...) asparagine glycosylation. A helical transmembrane segment spans residues 488–508 (LTMAYDALWLVIFQFGAVFVC). Topologically, residues 509-522 (YHSSKFACKVMMQR) are cytoplasmic. A helical transmembrane segment spans residues 523–543 (MGFALPMALSVPVTVLLLSTN). Over 544 to 576 (CRMRQKDSCYGTNVLTVELFWQCNGASMSLADF) the chain is Extracellular. The chain crosses the membrane as a helical span at residues 577 to 597 (ILTPQTWIWLCWLASQFWITI). The Cytoplasmic portion of the chain corresponds to 598 to 1045 (HLWNPKHERL…ISIWYIIYQL (448 aa)). The chain crosses the membrane as a helical span at residues 1046 to 1066 (VMLISSILGPGTIFVMIIGAI). The Extracellular segment spans residues 1067 to 1074 (SISFSIDT). The helical transmembrane segment at 1075-1095 (LISLVIVSIPVVVFIVVCLTA) threads the bilayer. At 1096–1100 (KPEHQ) the chain is on the cytoplasmic side. Residues 1101-1121 (LICAQTIGAIFAMLMTAVVVG) traverse the membrane as a helical segment. Residues 1122–1136 (TSLQLQKDGLLSPHS) lie on the Extracellular side of the membrane. A helical transmembrane segment spans residues 1137-1157 (MFTVAVATSFLTAAILHPLEF). T1158 is a topological domain (cytoplasmic). A helical transmembrane segment spans residues 1159 to 1179 (CIIPGTIYFLAIPCMYMLLPI). Residues 1180–1375 (YSVCNMHTVS…RAGLIAIRNS (196 aa)) lie on the Extracellular side of the membrane. A disordered region spans residues 1192 to 1216 (TREDPRPTEKNTLAKKTPGNLESGD). Residues 1280-1335 (QIDKCSEADEDEQAEIEDALEMSNQSHAAKKNQKWKQAQSEAWLADKALKRAEREY) adopt a coiled-coil conformation. The N-linked (GlcNAc...) asparagine glycan is linked to N1303. A helical membrane pass occupies residues 1376-1396 (HTVYFLMINIVFIISVLVLQI). The Cytoplasmic segment spans residues 1397-1440 (HKDCLNIEWPLGPKFNHTVRPCYANHDDNQKEEVWVMTRLQLEP). The helical transmembrane segment at 1441–1461 (IGLVFLIFFVSILVIQFLAML) threads the bilayer. Residues 1462 to 1668 (CHRFGTLAHI…SSGDVELRRF (207 aa)) lie on the Extracellular side of the membrane. Positions 1625 to 1668 (RLFTAQQDQNSPTSDGNRRKSNSRPWDQPTSSATSSGDVELRRF) are disordered. Composition is skewed to polar residues over residues 1628–1639 (TAQQDQNSPTSD) and 1647–1661 (SRPWDQPTSSATSSG).

The protein belongs to the chitin synthase family. Class IV subfamily.

The protein resides in the cell membrane. It carries out the reaction [(1-&gt;4)-N-acetyl-beta-D-glucosaminyl](n) + UDP-N-acetyl-alpha-D-glucosamine = [(1-&gt;4)-N-acetyl-beta-D-glucosaminyl](n+1) + UDP + H(+). In terms of biological role, may be involved in chitin synthesis in the pharynx during larval development. This chain is Chitin synthase chs-2, found in Caenorhabditis elegans.